We begin with the raw amino-acid sequence, 337 residues long: tRNA N6-adenosine threonylcarbamoyltransferase (337 aa).

Fe cation is bound by residues H111 and H115. Residues 134 to 138, D167, G180, and N272 each bind substrate; that span reads LVSGG. D300 contacts Fe cation.

This sequence belongs to the KAE1 / TsaD family. Fe(2+) serves as cofactor.

It localises to the cytoplasm. The enzyme catalyses L-threonylcarbamoyladenylate + adenosine(37) in tRNA = N(6)-L-threonylcarbamoyladenosine(37) in tRNA + AMP + H(+). Its function is as follows. Required for the formation of a threonylcarbamoyl group on adenosine at position 37 (t(6)A37) in tRNAs that read codons beginning with adenine. Is involved in the transfer of the threonylcarbamoyl moiety of threonylcarbamoyl-AMP (TC-AMP) to the N6 group of A37, together with TsaE and TsaB. TsaD likely plays a direct catalytic role in this reaction. The polypeptide is tRNA N6-adenosine threonylcarbamoyltransferase (Escherichia coli (strain K12 / MC4100 / BW2952)).